The following is a 221-amino-acid chain: PKHD-type hydroxylase A9601_13531 (221 aa).

The region spanning 80–174 (LIHGIMFTKS…RIVCVGWIES (95 aa)) is the Fe2OG dioxygenase domain. Fe cation is bound by residues His-98, Asp-100, and His-155. Residue Arg-165 coordinates 2-oxoglutarate.

It depends on Fe(2+) as a cofactor. Requires L-ascorbate as cofactor.

The protein is PKHD-type hydroxylase A9601_13531 of Prochlorococcus marinus (strain AS9601).